The sequence spans 184 residues: ATP synthase subunit b, chloroplastic (184 aa).

A helical transmembrane segment spans residues 27–49; that stretch reads LATNPINLSVVLGVLIFFGKGVL.

Belongs to the ATPase B chain family. F-type ATPases have 2 components, F(1) - the catalytic core - and F(0) - the membrane proton channel. F(1) has five subunits: alpha(3), beta(3), gamma(1), delta(1), epsilon(1). F(0) has four main subunits: a(1), b(1), b'(1) and c(10-14). The alpha and beta chains form an alternating ring which encloses part of the gamma chain. F(1) is attached to F(0) by a central stalk formed by the gamma and epsilon chains, while a peripheral stalk is formed by the delta, b and b' chains.

It localises to the plastid. It is found in the chloroplast thylakoid membrane. F(1)F(0) ATP synthase produces ATP from ADP in the presence of a proton or sodium gradient. F-type ATPases consist of two structural domains, F(1) containing the extramembraneous catalytic core and F(0) containing the membrane proton channel, linked together by a central stalk and a peripheral stalk. During catalysis, ATP synthesis in the catalytic domain of F(1) is coupled via a rotary mechanism of the central stalk subunits to proton translocation. Its function is as follows. Component of the F(0) channel, it forms part of the peripheral stalk, linking F(1) to F(0). The sequence is that of ATP synthase subunit b, chloroplastic from Buxus microphylla (Littleleaf boxwood).